Consider the following 161-residue polypeptide: Nucleoside diphosphate kinase (161 aa).

The ATP site is built by lysine 13, phenylalanine 61, arginine 89, threonine 95, arginine 106, and asparagine 116. Histidine 119 serves as the catalytic Pros-phosphohistidine intermediate.

This sequence belongs to the NDK family. Mg(2+) serves as cofactor.

Its subcellular location is the cytoplasm. The enzyme catalyses a 2'-deoxyribonucleoside 5'-diphosphate + ATP = a 2'-deoxyribonucleoside 5'-triphosphate + ADP. It carries out the reaction a ribonucleoside 5'-diphosphate + ATP = a ribonucleoside 5'-triphosphate + ADP. In terms of biological role, major role in the synthesis of nucleoside triphosphates other than ATP. The ATP gamma phosphate is transferred to the NDP beta phosphate via a ping-pong mechanism, using a phosphorylated active-site intermediate. The sequence is that of Nucleoside diphosphate kinase from Halobacterium salinarum (strain ATCC 29341 / DSM 671 / R1).